A 200-amino-acid chain; its full sequence is UPF0316 protein SACOL1973 (200 aa).

3 consecutive transmembrane segments (helical) span residues 8–28, 40–60, and 66–86; these read PWLM…FLTM, IAAS…GLVM, and IQNI…GMKI.

This sequence belongs to the UPF0316 family.

The protein resides in the cell membrane. This chain is UPF0316 protein SACOL1973, found in Staphylococcus aureus (strain COL).